The primary structure comprises 772 residues: Tubulin monoglycylase TTLL3 (772 aa).

The interval 50–81 (PTLLPPQKDLDSSAMGDSDTTEDEDEDEDEEF) is disordered. The span at 68–81 (DTTEDEDEDEDEEF) shows a compositional bias: acidic residues. The 360-residue stretch at 151–510 (ARNVLKLVVK…RMLDRNCDTG (360 aa)) folds into the TTL domain. ATP-binding positions include lysine 283, 289 to 290 (RG), 321 to 324 (QKYI), 334 to 336 (KFD), and 378 to 379 (CN). Arginine 289 serves as a coordination point for a protein. Residue serine 381 coordinates L-glutamate. The Mg(2+) site is built by aspartate 456, glutamate 469, and asparagine 471. An ATP-binding site is contributed by glutamate 469.

Requires Mg(2+) as cofactor. Expressed in brain, heart, kidney, testis, liver, lung, muscle, spleen, trachea and colon.

The protein resides in the cytoplasm. It localises to the cytoskeleton. Its subcellular location is the cell projection. The protein localises to the cilium. It is found in the cilium axoneme. The protein resides in the flagellum axoneme. It catalyses the reaction L-glutamyl-[protein] + glycine + ATP = glycyl-L-glutamyl-[protein] + ADP + phosphate + H(+). In terms of biological role, monoglycylase which modifies alpha- and beta-tubulin, adding a single glycine on the gamma-carboxyl groups of specific glutamate residues to generate monoglycine side chains within the C-terminal tail of tubulin. Not involved in elongation step of the polyglycylation reaction. Preferentially glycylates a beta-tail peptide over the alpha-tail, although shifts its preference toward alpha-tail as beta-tail glutamylation increases. Competes with polyglutamylases for modification site on beta-tubulin substrate, thereby creating an anticorrelation between glycylation and glutamylation reactions. Together with TTLL8, mediates microtubule glycylation of primary and motile cilia, which is essential for their stability and maintenance. Involved in microtubule glycylation of primary cilia in colon which controls cell proliferation of epithelial cells and plays an essential role in colon cancer development. Together with TTLL8, glycylates sperm flagella which regulates axonemal dynein motor activity, thereby controlling flagellar beat, directional sperm swimming and male fertility. The polypeptide is Tubulin monoglycylase TTLL3 (Homo sapiens (Human)).